A 209-amino-acid polypeptide reads, in one-letter code: Histidine biosynthesis bifunctional protein HisIE (209 aa).

Residues 1–116 (MKQADELRFN…EEQAADRFGI (116 aa)) are phosphoribosyl-AMP cyclohydrolase. Residues 117–209 (MNELERVIAE…LKKRHSEIEE (93 aa)) are phosphoribosyl-ATP pyrophosphohydrolase.

This sequence in the N-terminal section; belongs to the PRA-CH family. The protein in the C-terminal section; belongs to the PRA-PH family.

It localises to the cytoplasm. It carries out the reaction 1-(5-phospho-beta-D-ribosyl)-ATP + H2O = 1-(5-phospho-beta-D-ribosyl)-5'-AMP + diphosphate + H(+). The enzyme catalyses 1-(5-phospho-beta-D-ribosyl)-5'-AMP + H2O = 1-(5-phospho-beta-D-ribosyl)-5-[(5-phospho-beta-D-ribosylamino)methylideneamino]imidazole-4-carboxamide. It functions in the pathway amino-acid biosynthesis; L-histidine biosynthesis; L-histidine from 5-phospho-alpha-D-ribose 1-diphosphate: step 2/9. Its pathway is amino-acid biosynthesis; L-histidine biosynthesis; L-histidine from 5-phospho-alpha-D-ribose 1-diphosphate: step 3/9. This chain is Histidine biosynthesis bifunctional protein HisIE (hisI), found in Bacillus subtilis (strain 168).